Here is a 179-residue protein sequence, read N- to C-terminus: Ferric nitrobindin-like protein (179 aa).

Positions 17–23 (GRWEGLG) match the GXWXGXG motif.

Belongs to the nitrobindin family.

This chain is Ferric nitrobindin-like protein, found in Thermobifida fusca (strain YX).